The chain runs to 128 residues: Iron-sulfur cluster insertion protein ErpA (128 aa).

Iron-sulfur cluster is bound by residues cysteine 56, cysteine 120, and cysteine 122.

This sequence belongs to the HesB/IscA family. As to quaternary structure, homodimer. It depends on iron-sulfur cluster as a cofactor.

Its function is as follows. Required for insertion of 4Fe-4S clusters for at least IspG. In Xanthomonas campestris pv. campestris (strain 8004), this protein is Iron-sulfur cluster insertion protein ErpA.